The following is a 691-amino-acid chain: Elongation factor G (691 aa).

Positions 10–284 (KMYRNIGIMA…AIVKYLPSPL (275 aa)) constitute a tr-type G domain. GTP-binding positions include 19-26 (AHIDAGKT), 83-87 (DTPGH), and 137-140 (NKMD).

Belongs to the TRAFAC class translation factor GTPase superfamily. Classic translation factor GTPase family. EF-G/EF-2 subfamily.

The protein resides in the cytoplasm. Its function is as follows. Catalyzes the GTP-dependent ribosomal translocation step during translation elongation. During this step, the ribosome changes from the pre-translocational (PRE) to the post-translocational (POST) state as the newly formed A-site-bound peptidyl-tRNA and P-site-bound deacylated tRNA move to the P and E sites, respectively. Catalyzes the coordinated movement of the two tRNA molecules, the mRNA and conformational changes in the ribosome. This chain is Elongation factor G, found in Clostridium tetani (strain Massachusetts / E88).